The following is a 378-amino-acid chain: MVTSSSVIVLTLWAALVSASPVADPLVTPAPKLEDLEKRATSCTFSGSEGASSASKSKTSCSTIVLSDVAVPSGTTLDLTDLNDGTHVIFEGETTFGYEEWSGPLVSVSGTDITVTGADGAYLNGDGSRWWDGEGSNGGKTKPKFFYAHDLTSSTISGIYIQNSPVQVFSIDGSTYLTMEDITIDNTDGDDGEAANTDGFDIGDSTYITITGANVYNQDDCVAVNSGENIYFSGGVCSGGHGLSIGSVGGRSDNTVKNVTFYDSEIKSSQNGVRIKTIYGDTGSVSEVTYKEITLSDITDYGIVVEQNYDDTSKSPTDGITIEDFVLDNVQGSVESSGTNIYIVCGSDSCTDWTWTDVDVSGGKTSSDCENVPDDISC.

A signal peptide spans 1–19 (MVTSSSVIVLTLWAALVSA). Residues 20–38 (SPVADPLVTPAPKLEDLEK) constitute a propeptide that is removed on maturation. A disulfide bond links cysteine 43 and cysteine 61. PbH1 repeat units follow at residues 103–125 (GPLV…YLNG), 174–204 (STYL…DIGD), and 205–226 (STYI…AVNS). Residue aspartate 219 is the Proton donor of the active site. Cysteine 221 and cysteine 237 are oxidised to a cystine. Histidine 241 is a catalytic residue. PbH1 repeat units follow at residues 256-277 (VKNV…RIKT), 285-307 (VSEV…VVEQ), and 317-345 (TDGI…YIVC). Asparagine 258 carries an N-linked (GlcNAc...) asparagine glycan. 2 disulfide bridges follow: cysteine 345–cysteine 350 and cysteine 369–cysteine 378.

It belongs to the glycosyl hydrolase 28 family.

It is found in the secreted. It catalyses the reaction (1,4-alpha-D-galacturonosyl)n+m + H2O = (1,4-alpha-D-galacturonosyl)n + (1,4-alpha-D-galacturonosyl)m.. Its function is as follows. Involved in maceration and soft-rotting of plant tissue. Hydrolyzes the 1,4-alpha glycosidic bonds of de-esterified pectate in the smooth region of the plant cell wall. The protein is Probable endopolygalacturonase E (pgaE) of Aspergillus niger (strain ATCC MYA-4892 / CBS 513.88 / FGSC A1513).